We begin with the raw amino-acid sequence, 299 residues long: HTH-type transcriptional regulator ArgP (299 aa).

The HTH lysR-type domain occupies 4-60 (PDYRTLQALDAVIRERGFERAAQKLCITQSAVSQRIKQLENMFGQPLLVRTVPPRPT). Residues 21–40 (FERAAQKLCITQSAVSQRIK) constitute a DNA-binding region (H-T-H motif).

This sequence belongs to the LysR transcriptional regulatory family. Homodimer.

In terms of biological role, controls the transcription of genes involved in arginine and lysine metabolism. This Erwinia tasmaniensis (strain DSM 17950 / CFBP 7177 / CIP 109463 / NCPPB 4357 / Et1/99) protein is HTH-type transcriptional regulator ArgP.